The primary structure comprises 210 residues: Cytochrome c biogenesis ATP-binding export protein CcmA (210 aa).

In terms of domain architecture, ABC transporter spans 1 to 208 (MHLNQLVISH…KVRTLSLDQF (208 aa)). An ATP-binding site is contributed by 38–45 (GHNGIGKT).

This sequence belongs to the ABC transporter superfamily. CcmA exporter (TC 3.A.1.107) family. As to quaternary structure, the complex is composed of two ATP-binding proteins (CcmA) and two transmembrane proteins (CcmB).

The protein resides in the cell inner membrane. It catalyses the reaction heme b(in) + ATP + H2O = heme b(out) + ADP + phosphate + H(+). Functionally, part of the ABC transporter complex CcmAB involved in the biogenesis of c-type cytochromes; once thought to export heme, this seems not to be the case, but its exact role is uncertain. Responsible for energy coupling to the transport system. The chain is Cytochrome c biogenesis ATP-binding export protein CcmA from Haemophilus ducreyi (strain 35000HP / ATCC 700724).